The chain runs to 282 residues: S-formylglutathione hydrolase (282 aa).

K4 is modified (N6-succinyllysine). S149 serves as the catalytic Charge relay system. An N6-acetyllysine modification is found at K200. Active-site charge relay system residues include D226 and H260.

This sequence belongs to the esterase D family. Homodimer.

It localises to the cytoplasm. Its subcellular location is the cytoplasmic vesicle. It carries out the reaction S-formylglutathione + H2O = formate + glutathione + H(+). Functionally, serine hydrolase involved in the detoxification of formaldehyde. The protein is S-formylglutathione hydrolase (Esd) of Rattus norvegicus (Rat).